The sequence spans 111 residues: WAP four-disulfide core domain protein 12 (111 aa).

The signal sequence occupies residues Met-1–Gly-23. Positions Asn-27–Val-74 constitute a WAP domain. Intrachain disulfides connect Cys-34/Cys-62, Cys-41/Cys-66, Cys-49/Cys-61, and Cys-55/Cys-70.

Its subcellular location is the secreted. Functionally, antibacterial protein. Putative acid-stable proteinase inhibitor. The chain is WAP four-disulfide core domain protein 12 (WFDC12) from Saimiri boliviensis boliviensis (Bolivian squirrel monkey).